The sequence spans 348 residues: Aspartate carbamoyltransferase catalytic subunit (348 aa).

Residues Arg-59 and Thr-60 each contribute to the carbamoyl phosphate site. Lys-87 serves as a coordination point for L-aspartate. Positions 109, 142, and 145 each coordinate carbamoyl phosphate. Positions 182 and 253 each coordinate L-aspartate. Carbamoyl phosphate contacts are provided by Gly-294 and Pro-295.

This sequence belongs to the aspartate/ornithine carbamoyltransferase superfamily. ATCase family. In terms of assembly, heterododecamer (2C3:3R2) of six catalytic PyrB chains organized as two trimers (C3), and six regulatory PyrI chains organized as three dimers (R2).

The enzyme catalyses carbamoyl phosphate + L-aspartate = N-carbamoyl-L-aspartate + phosphate + H(+). It participates in pyrimidine metabolism; UMP biosynthesis via de novo pathway; (S)-dihydroorotate from bicarbonate: step 2/3. Catalyzes the condensation of carbamoyl phosphate and aspartate to form carbamoyl aspartate and inorganic phosphate, the committed step in the de novo pyrimidine nucleotide biosynthesis pathway. This Prochlorococcus marinus (strain MIT 9303) protein is Aspartate carbamoyltransferase catalytic subunit.